Reading from the N-terminus, the 30-residue chain is Snaclec coagulation factor IX/factor X-binding protein subunit B (30 aa).

Cysteine 2 and cysteine 13 are disulfide-bonded. Residues 9–30 (YEGHCYRVFTEPQNWADAEKFC) enclose the C-type lectin domain.

The protein belongs to the snaclec family. As to quaternary structure, heterodimer of subunits A and B; disulfide-linked. Post-translationally, glycosylated. As to expression, expressed by the venom gland.

The protein resides in the secreted. Functionally, anticoagulant protein which binds to the gamma-carboxyglutamic acid-domain regions of factors IX (F9) and factor X (F10) in the presence of calcium with a 1 to 1 stoichiometry. This chain is Snaclec coagulation factor IX/factor X-binding protein subunit B, found in Bothrops jararaca (Jararaca).